The following is a 338-amino-acid chain: Activator of 90 kDa heat shock protein ATPase homolog 1 (338 aa).

Lys3 carries the N6-acetyllysine modification. Lys182 participates in a covalent cross-link: Glycyl lysine isopeptide (Lys-Gly) (interchain with G-Cter in SUMO1). Ser193 carries the phosphoserine modification. Residue Lys203 forms a Glycyl lysine isopeptide (Lys-Gly) (interchain with G-Cter in SUMO2) linkage. At Lys212 the chain carries N6-acetyllysine. Tyr223 is modified (phosphotyrosine; by ABL).

The protein belongs to the AHA1 family. As to quaternary structure, interacts with HSPCA/HSP90. Interacts with HSP90AA1; the interaction activates HSP90AA1 ATPase activity. Interacts with HSP90AB1. Interacts with GCH1. Interacts with SRPK1. Interacts with FLCN. Post-translationally, phosphorylation at Tyr-223 enhances binding to chaperone HSP90AA1.

The protein localises to the cytoplasm. It localises to the cytosol. Its subcellular location is the endoplasmic reticulum. Its function is as follows. Acts as a co-chaperone of HSP90AA1. Activates the ATPase activity of HSP90AA1 leading to increase in its chaperone activity. Competes with the inhibitory co-chaperone FNIP1 for binding to HSP90AA1, thereby providing a reciprocal regulatory mechanism for chaperoning of client proteins. Competes with the inhibitory co-chaperone TSC1 for binding to HSP90AA1, thereby providing a reciprocal regulatory mechanism for chaperoning of client proteins. The chain is Activator of 90 kDa heat shock protein ATPase homolog 1 (Ahsa1) from Mus musculus (Mouse).